A 483-amino-acid chain; its full sequence is GTPase Der (483 aa).

2 EngA-type G domains span residues 3-167 and 212-387; these read FTLA…GEER and LRIA…EIWN. GTP contacts are provided by residues 9-16, 56-60, 119-122, 218-225, 265-269, and 330-333; these read GRPNVGKS, DTAGL, NKAE, GRPNAGKS, DTAGM, and NKWD. The KH-like domain maps to 388-472; that stretch reads RRISTGRLNR…PIRLSLRTSD (85 aa).

The protein belongs to the TRAFAC class TrmE-Era-EngA-EngB-Septin-like GTPase superfamily. EngA (Der) GTPase family. As to quaternary structure, associates with the 50S ribosomal subunit.

GTPase that plays an essential role in the late steps of ribosome biogenesis. This is GTPase Der from Brucella abortus (strain 2308).